A 466-amino-acid chain; its full sequence is A-type ATP synthase subunit B (466 aa).

The protein belongs to the ATPase alpha/beta chains family. As to quaternary structure, has multiple subunits with at least A(3), B(3), C, D, E, F, H, I and proteolipid K(x).

The protein resides in the cell membrane. Functionally, component of the A-type ATP synthase that produces ATP from ADP in the presence of a proton gradient across the membrane. The B chain is a regulatory subunit. In Sulfolobus acidocaldarius (strain ATCC 33909 / DSM 639 / JCM 8929 / NBRC 15157 / NCIMB 11770), this protein is A-type ATP synthase subunit B.